A 249-amino-acid polypeptide reads, in one-letter code: 2,3-bisphosphoglycerate-dependent phosphoglycerate mutase (249 aa).

Residues 9–16 (RHGQSQWN), 22–23 (TG), R61, 88–91 (ERHY), K99, 115–116 (RR), and 184–185 (GN) each bind substrate. H10 serves as the catalytic Tele-phosphohistidine intermediate. The active-site Proton donor/acceptor is E88.

It belongs to the phosphoglycerate mutase family. BPG-dependent PGAM subfamily. In terms of assembly, homodimer.

It catalyses the reaction (2R)-2-phosphoglycerate = (2R)-3-phosphoglycerate. Its pathway is carbohydrate degradation; glycolysis; pyruvate from D-glyceraldehyde 3-phosphate: step 3/5. Catalyzes the interconversion of 2-phosphoglycerate and 3-phosphoglycerate. In Xylella fastidiosa (strain M12), this protein is 2,3-bisphosphoglycerate-dependent phosphoglycerate mutase.